Here is a 391-residue protein sequence, read N- to C-terminus: Phosphoglycerate kinase (391 aa).

Residues 21-23, Arg-36, 59-62, Arg-113, and Arg-146 contribute to the substrate site; these read DLN and HLGR. ATP is bound by residues Lys-197, Glu-319, and 345 to 348; that span reads GGDT.

This sequence belongs to the phosphoglycerate kinase family. In terms of assembly, monomer.

The protein localises to the cytoplasm. It carries out the reaction (2R)-3-phosphoglycerate + ATP = (2R)-3-phospho-glyceroyl phosphate + ADP. The protein operates within carbohydrate degradation; glycolysis; pyruvate from D-glyceraldehyde 3-phosphate: step 2/5. In Shewanella baltica (strain OS195), this protein is Phosphoglycerate kinase.